The primary structure comprises 106 residues: Thiosulfate sulfurtransferase GlpE (106 aa).

Residues S17–A105 form the Rhodanese domain. C65 (cysteine persulfide intermediate) is an active-site residue.

This sequence belongs to the GlpE family.

It is found in the cytoplasm. It catalyses the reaction thiosulfate + hydrogen cyanide = thiocyanate + sulfite + 2 H(+). The enzyme catalyses thiosulfate + [thioredoxin]-dithiol = [thioredoxin]-disulfide + hydrogen sulfide + sulfite + 2 H(+). In terms of biological role, transferase that catalyzes the transfer of sulfur from thiosulfate to thiophilic acceptors such as cyanide or dithiols. May function in a CysM-independent thiosulfate assimilation pathway by catalyzing the conversion of thiosulfate to sulfite, which can then be used for L-cysteine biosynthesis. The protein is Thiosulfate sulfurtransferase GlpE of Vibrio vulnificus (strain CMCP6).